The primary structure comprises 346 residues: S-adenosylmethionine:tRNA ribosyltransferase-isomerase (346 aa).

Belongs to the QueA family. Monomer.

Its subcellular location is the cytoplasm. The catalysed reaction is 7-aminomethyl-7-carbaguanosine(34) in tRNA + S-adenosyl-L-methionine = epoxyqueuosine(34) in tRNA + adenine + L-methionine + 2 H(+). It functions in the pathway tRNA modification; tRNA-queuosine biosynthesis. In terms of biological role, transfers and isomerizes the ribose moiety from AdoMet to the 7-aminomethyl group of 7-deazaguanine (preQ1-tRNA) to give epoxyqueuosine (oQ-tRNA). This chain is S-adenosylmethionine:tRNA ribosyltransferase-isomerase, found in Neisseria gonorrhoeae (strain ATCC 700825 / FA 1090).